Reading from the N-terminus, the 133-residue chain is L-ectoine synthase (133 aa).

It belongs to the ectoine synthase family.

The enzyme catalyses (2S)-4-acetamido-2-aminobutanoate = L-ectoine + H2O. The protein operates within amine and polyamine biosynthesis; ectoine biosynthesis; L-ectoine from L-aspartate 4-semialdehyde: step 3/3. Catalyzes the circularization of gamma-N-acetyl-alpha,gamma-diaminobutyric acid (ADABA) to ectoine (1,4,5,6-tetrahydro-2-methyl-4-pyrimidine carboxylic acid), which is an excellent osmoprotectant. This Bordetella petrii (strain ATCC BAA-461 / DSM 12804 / CCUG 43448) protein is L-ectoine synthase.